A 917-amino-acid polypeptide reads, in one-letter code: Phosphoenolpyruvate carboxylase (917 aa).

Residues histidine 145 and lysine 578 contribute to the active site.

It belongs to the PEPCase type 1 family. Mg(2+) is required as a cofactor.

The enzyme catalyses oxaloacetate + phosphate = phosphoenolpyruvate + hydrogencarbonate. Forms oxaloacetate, a four-carbon dicarboxylic acid source for the tricarboxylic acid cycle. This Azoarcus sp. (strain BH72) protein is Phosphoenolpyruvate carboxylase.